Here is a 337-residue protein sequence, read N- to C-terminus: Holliday junction branch migration complex subunit RuvB (337 aa).

Residues 1-22 (MEDERITSAEVQSPDEENEELS) form a disordered region. The segment at 1–184 (MEDERITSAE…FGIVEHMNYY (184 aa)) is large ATPase domain (RuvB-L). Residues leucine 23, arginine 24, glycine 65, lysine 68, threonine 69, threonine 70, 131–133 (EDF), arginine 174, tyrosine 184, and arginine 221 contribute to the ATP site. Residue threonine 69 coordinates Mg(2+). A small ATPAse domain (RuvB-S) region spans residues 185 to 255 (NEADLANIVR…LVSQSLKLLQ (71 aa)). The head domain (RuvB-H) stretch occupies residues 258–337 (NRGLDRTDKK…LGLIDQYMNK (80 aa)). Residues arginine 313 and arginine 318 each coordinate DNA.

This sequence belongs to the RuvB family. As to quaternary structure, homohexamer. Forms an RuvA(8)-RuvB(12)-Holliday junction (HJ) complex. HJ DNA is sandwiched between 2 RuvA tetramers; dsDNA enters through RuvA and exits via RuvB. An RuvB hexamer assembles on each DNA strand where it exits the tetramer. Each RuvB hexamer is contacted by two RuvA subunits (via domain III) on 2 adjacent RuvB subunits; this complex drives branch migration. In the full resolvosome a probable DNA-RuvA(4)-RuvB(12)-RuvC(2) complex forms which resolves the HJ.

It localises to the cytoplasm. The catalysed reaction is ATP + H2O = ADP + phosphate + H(+). Functionally, the RuvA-RuvB-RuvC complex processes Holliday junction (HJ) DNA during genetic recombination and DNA repair, while the RuvA-RuvB complex plays an important role in the rescue of blocked DNA replication forks via replication fork reversal (RFR). RuvA specifically binds to HJ cruciform DNA, conferring on it an open structure. The RuvB hexamer acts as an ATP-dependent pump, pulling dsDNA into and through the RuvAB complex. RuvB forms 2 homohexamers on either side of HJ DNA bound by 1 or 2 RuvA tetramers; 4 subunits per hexamer contact DNA at a time. Coordinated motions by a converter formed by DNA-disengaged RuvB subunits stimulates ATP hydrolysis and nucleotide exchange. Immobilization of the converter enables RuvB to convert the ATP-contained energy into a lever motion, pulling 2 nucleotides of DNA out of the RuvA tetramer per ATP hydrolyzed, thus driving DNA branch migration. The RuvB motors rotate together with the DNA substrate, which together with the progressing nucleotide cycle form the mechanistic basis for DNA recombination by continuous HJ branch migration. Branch migration allows RuvC to scan DNA until it finds its consensus sequence, where it cleaves and resolves cruciform DNA. This chain is Holliday junction branch migration complex subunit RuvB, found in Pediococcus pentosaceus (strain ATCC 25745 / CCUG 21536 / LMG 10740 / 183-1w).